The chain runs to 269 residues: Hydroxyethylthiazole kinase (269 aa).

Met46 lines the substrate pocket. Positions 122 and 168 each coordinate ATP. Gly195 contacts substrate.

The protein belongs to the Thz kinase family. The cofactor is Mg(2+).

The enzyme catalyses 5-(2-hydroxyethyl)-4-methylthiazole + ATP = 4-methyl-5-(2-phosphooxyethyl)-thiazole + ADP + H(+). It participates in cofactor biosynthesis; thiamine diphosphate biosynthesis; 4-methyl-5-(2-phosphoethyl)-thiazole from 5-(2-hydroxyethyl)-4-methylthiazole: step 1/1. In terms of biological role, catalyzes the phosphorylation of the hydroxyl group of 4-methyl-5-beta-hydroxyethylthiazole (THZ). The chain is Hydroxyethylthiazole kinase from Chloroflexus aurantiacus (strain ATCC 29366 / DSM 635 / J-10-fl).